Consider the following 197-residue polypeptide: Holliday junction branch migration complex subunit RuvA (197 aa).

Residues 1 to 64 (MIDSIVGTIQ…LSELECYGFL (64 aa)) form a domain I region. Positions 65-143 (TREERELFLK…KEFKVASTSG (79 aa)) are domain II. Positions 144 to 152 (TEEKTYEKL) are flexible linker. The interval 152 to 197 (LEEISLALLSLGYEIDEINQVLSSEDFSELSLEDGIKLALKKLSKI) is domain III.

The protein belongs to the RuvA family. As to quaternary structure, homotetramer. Forms an RuvA(8)-RuvB(12)-Holliday junction (HJ) complex. HJ DNA is sandwiched between 2 RuvA tetramers; dsDNA enters through RuvA and exits via RuvB. An RuvB hexamer assembles on each DNA strand where it exits the tetramer. Each RuvB hexamer is contacted by two RuvA subunits (via domain III) on 2 adjacent RuvB subunits; this complex drives branch migration. In the full resolvosome a probable DNA-RuvA(4)-RuvB(12)-RuvC(2) complex forms which resolves the HJ.

The protein localises to the cytoplasm. In terms of biological role, the RuvA-RuvB-RuvC complex processes Holliday junction (HJ) DNA during genetic recombination and DNA repair, while the RuvA-RuvB complex plays an important role in the rescue of blocked DNA replication forks via replication fork reversal (RFR). RuvA specifically binds to HJ cruciform DNA, conferring on it an open structure. The RuvB hexamer acts as an ATP-dependent pump, pulling dsDNA into and through the RuvAB complex. HJ branch migration allows RuvC to scan DNA until it finds its consensus sequence, where it cleaves and resolves the cruciform DNA. The sequence is that of Holliday junction branch migration complex subunit RuvA from Caldicellulosiruptor saccharolyticus (strain ATCC 43494 / DSM 8903 / Tp8T 6331).